We begin with the raw amino-acid sequence, 212 residues long: 3,4-dihydroxy-2-butanone 4-phosphate synthase (212 aa).

D-ribulose 5-phosphate-binding positions include 37–38, Asp42, 150–154, and Glu174; these read RE and RRGHT. Glu38 is a binding site for Mg(2+). Residue His153 coordinates Mg(2+).

The protein belongs to the DHBP synthase family. In terms of assembly, homodimer. It depends on Mg(2+) as a cofactor. Mn(2+) is required as a cofactor.

The catalysed reaction is D-ribulose 5-phosphate = (2S)-2-hydroxy-3-oxobutyl phosphate + formate + H(+). It functions in the pathway cofactor biosynthesis; riboflavin biosynthesis; 2-hydroxy-3-oxobutyl phosphate from D-ribulose 5-phosphate: step 1/1. Catalyzes the conversion of D-ribulose 5-phosphate to formate and 3,4-dihydroxy-2-butanone 4-phosphate. The protein is 3,4-dihydroxy-2-butanone 4-phosphate synthase of Shewanella halifaxensis (strain HAW-EB4).